Consider the following 252-residue polypeptide: Phosphate import ATP-binding protein PstB (252 aa).

The ABC transporter domain maps to 5 to 247; that stretch reads MRGQDVKVFY…PKEQRTQDYI (243 aa). Residue 37–44 coordinates ATP; it reads GPSGCGKS.

Belongs to the ABC transporter superfamily. Phosphate importer (TC 3.A.1.7) family. In terms of assembly, the complex is composed of two ATP-binding proteins (PstB), two transmembrane proteins (PstC and PstA) and a solute-binding protein (PstS).

The protein resides in the cell inner membrane. It catalyses the reaction phosphate(out) + ATP + H2O = ADP + 2 phosphate(in) + H(+). In terms of biological role, part of the ABC transporter complex PstSACB involved in phosphate import. Responsible for energy coupling to the transport system. This Bartonella quintana (strain Toulouse) (Rochalimaea quintana) protein is Phosphate import ATP-binding protein PstB.